The following is a 195-amino-acid chain: Segregation and condensation protein B (195 aa).

The segment at 169–195 (LEDVAASQENSREAGGRGSIPGHPGEE) is disordered.

Belongs to the ScpB family. Homodimer. Homodimerization may be required to stabilize the binding of ScpA to the Smc head domains. Component of a cohesin-like complex composed of ScpA, ScpB and the Smc homodimer, in which ScpA and ScpB bind to the head domain of Smc. The presence of the three proteins is required for the association of the complex with DNA.

It is found in the cytoplasm. Participates in chromosomal partition during cell division. May act via the formation of a condensin-like complex containing Smc and ScpA that pull DNA away from mid-cell into both cell halves. The chain is Segregation and condensation protein B from Moorella thermoacetica (strain ATCC 39073 / JCM 9320).